Here is a 160-residue protein sequence, read N- to C-terminus: Urease accessory protein UreE (160 aa).

The protein belongs to the UreE family.

It is found in the cytoplasm. Functionally, involved in urease metallocenter assembly. Binds nickel. Probably functions as a nickel donor during metallocenter assembly. The polypeptide is Urease accessory protein UreE (Acinetobacter baumannii (strain ACICU)).